The primary structure comprises 199 residues: MIARDDITGLILAGGRGSRMGGTDKGLQPLHGTPMAMHTMMRLTPQVGGLMINANRNLAAYESFGVPVYTDTVPDFAGPLAGMLAGLEQCATPWMVTAPCDSPFLPTDLVARLAQAIEAEGADLAIPVTLDEDGRRQTQPVFCLMPVSALDSLVAYLSGGGRKIETWAASHRLAEVLFDDAAAFANINTLDELRTHETR.

Residues 12–14, Lys-25, Asn-53, Asp-71, and Asp-101 contribute to the GTP site; that span reads LAG. Asp-101 provides a ligand contact to Mg(2+).

It belongs to the MobA family. In terms of assembly, monomer. Mg(2+) serves as cofactor.

It is found in the cytoplasm. It carries out the reaction Mo-molybdopterin + GTP + H(+) = Mo-molybdopterin guanine dinucleotide + diphosphate. Functionally, transfers a GMP moiety from GTP to Mo-molybdopterin (Mo-MPT) cofactor (Moco or molybdenum cofactor) to form Mo-molybdopterin guanine dinucleotide (Mo-MGD) cofactor. This chain is Molybdenum cofactor guanylyltransferase, found in Cupriavidus necator (strain ATCC 17699 / DSM 428 / KCTC 22496 / NCIMB 10442 / H16 / Stanier 337) (Ralstonia eutropha).